We begin with the raw amino-acid sequence, 142 residues long: Transcriptional regulator MraZ (142 aa).

SpoVT-AbrB domains follow at residues 5–47 and 76–119; these read EYNH…PLGE and ANEV…SKEK.

The protein belongs to the MraZ family. As to quaternary structure, forms oligomers.

It localises to the cytoplasm. Its subcellular location is the nucleoid. The polypeptide is Transcriptional regulator MraZ (Clostridium acetobutylicum (strain ATCC 824 / DSM 792 / JCM 1419 / IAM 19013 / LMG 5710 / NBRC 13948 / NRRL B-527 / VKM B-1787 / 2291 / W)).